A 178-amino-acid chain; its full sequence is Large ribosomal subunit protein uL10 (178 aa).

This sequence belongs to the universal ribosomal protein uL10 family. Part of the ribosomal stalk of the 50S ribosomal subunit. The N-terminus interacts with L11 and the large rRNA to form the base of the stalk. The C-terminus forms an elongated spine to which L12 dimers bind in a sequential fashion forming a multimeric L10(L12)X complex.

Its function is as follows. Forms part of the ribosomal stalk, playing a central role in the interaction of the ribosome with GTP-bound translation factors. The chain is Large ribosomal subunit protein uL10 from Dictyoglomus thermophilum (strain ATCC 35947 / DSM 3960 / H-6-12).